Consider the following 137-residue polypeptide: Large ribosomal subunit protein eL28 (137 aa).

S2 is modified (N-acetylserine). Residues K58 and K65 each participate in a glycyl lysine isopeptide (Lys-Gly) (interchain with G-Cter in SUMO2) cross-link. S115 carries the phosphoserine modification.

The protein belongs to the eukaryotic ribosomal protein eL28 family. Component of the large ribosomal subunit.

The protein localises to the cytoplasm. In terms of biological role, component of the large ribosomal subunit. The ribosome is a large ribonucleoprotein complex responsible for the synthesis of proteins in the cell. The chain is Large ribosomal subunit protein eL28 (Rpl28) from Rattus norvegicus (Rat).